The following is a 230-amino-acid chain: uncharacterized protein (230 aa).

A run of 7 helical transmembrane segments spans residues 34-54, 56-76, 87-107, 111-131, 146-166, 167-187, and 205-225; these read FFAG…MNFQ, VVQY…GLMF, MLFA…GMVI, GLGA…LMSV, MLFI…FLGS, PMFQ…YIAY, and VSLY…IGIF.

Belongs to the BI1 family.

The protein resides in the cell membrane. This is an uncharacterized protein from Helicobacter pylori (strain J99 / ATCC 700824) (Campylobacter pylori J99).